The following is a 130-amino-acid chain: Granulin (130 aa).

A signal peptide spans 1–26; sequence MNYSKIFIFGIISLILMALFSSTVES. 2 disulfides stabilise this stretch: Cys67–Cys79 and Cys73–Cys89.

It belongs to the granulin family. Post-translationally, granulins are disulfide bridged.

Its subcellular location is the secreted. This chain is Granulin (grn), found in Dictyostelium discoideum (Social amoeba).